The following is a 407-amino-acid chain: MEGSVSEFLTVRLSSQKEADIPWLVWSAEQQEVIASGQVAGWEALHEIESYADQRSVVVLLAASDLILTSVEIPPGASRQLENMLPYLLEDEIAQDVEDVHFCVLSKGRETADVVGVDRLWLRACLDHLKACGFDVKRVLPDVLAIPRPEHGLAALQLGDEWLVRKSTTQGMAVDAQWLSLLAASDWVQNEGEYLPLQALTPLPELSLAETQEWRYEPSGLVMQLLTQEALTSKFNLLTGSFKLKSSWLRYWQIWRKVAIAAGLFVAVSISYSLFQAHQYEAQADAYRAESERIFRSIFPDKQKIPTVTYLKRQMSDEMARLSGGASVGSVLKWLSPLPEALKGVNLQLQSIKFDSNRSEIRLEATSRDFQSFEQARTQLEQYFAVEQGQLNKNGEQVFGVFVVKPK.

The Cytoplasmic portion of the chain corresponds to 1–257 (MEGSVSEFLT…WLRYWQIWRK (257 aa)). The helical transmembrane segment at 258–275 (VAIAAGLFVAVSISYSLF) threads the bilayer. Residues 276–407 (QAHQYEAQAD…VFGVFVVKPK (132 aa)) lie on the Periplasmic side of the membrane.

This sequence belongs to the GSP L family. In terms of assembly, type II secretion system is composed of four main components: the outer membrane complex, the inner membrane complex, the cytoplasmic secretion ATPase and the periplasm-spanning pseudopilus. Forms homodimers. Interacts with EpsM/GspM. Interacts with EpsE/GspE and EpsF/GspF.

The protein resides in the cell inner membrane. Inner membrane component of the type II secretion system required for the energy-dependent secretion of extracellular factors such as proteases and toxins from the periplasm. Plays a role in the complex assembly and recruits EpsM resulting in a stable complex in the inner membrane. Provides thus a link between the energy-providing EpsE protein in the cytoplasm and the rest of the T2SS machinery. The protein is Type II secretion system protein L (epsL) of Vibrio cholerae serotype O1 (strain ATCC 39315 / El Tor Inaba N16961).